A 264-amino-acid chain; its full sequence is Glutamate racemase (264 aa).

Substrate-binding positions include Asp10–Ser11 and Tyr42–Gly43. The active-site Proton donor/acceptor is the Cys73. Asn74–Thr75 contacts substrate. Catalysis depends on Cys183, which acts as the Proton donor/acceptor. Substrate is bound at residue Thr184 to His185.

It belongs to the aspartate/glutamate racemases family.

The catalysed reaction is L-glutamate = D-glutamate. The protein operates within cell wall biogenesis; peptidoglycan biosynthesis. Its function is as follows. Provides the (R)-glutamate required for cell wall biosynthesis. The polypeptide is Glutamate racemase (Streptococcus pyogenes serotype M6 (strain ATCC BAA-946 / MGAS10394)).